The chain runs to 121 residues: Large ribosomal subunit protein uL14 (121 aa).

It belongs to the universal ribosomal protein uL14 family. Part of the 50S ribosomal subunit. Forms a cluster with proteins L3 and L19. In the 70S ribosome, L14 and L19 interact and together make contacts with the 16S rRNA in bridges B5 and B8.

Its function is as follows. Binds to 23S rRNA. Forms part of two intersubunit bridges in the 70S ribosome. The polypeptide is Large ribosomal subunit protein uL14 (Synechococcus sp. (strain RCC307)).